The following is a 107-amino-acid chain: Small ribosomal subunit protein uS10c (107 aa).

The protein belongs to the universal ribosomal protein uS10 family. Part of the 30S ribosomal subunit.

The protein resides in the plastid. It localises to the chloroplast. Functionally, involved in the binding of tRNA to the ribosomes. The polypeptide is Small ribosomal subunit protein uS10c (Thalassiosira pseudonana (Marine diatom)).